The following is a 76-amino-acid chain: Exodeoxyribonuclease 7 small subunit (76 aa).

The protein belongs to the XseB family. In terms of assembly, heterooligomer composed of large and small subunits.

The protein resides in the cytoplasm. The enzyme catalyses Exonucleolytic cleavage in either 5'- to 3'- or 3'- to 5'-direction to yield nucleoside 5'-phosphates.. Functionally, bidirectionally degrades single-stranded DNA into large acid-insoluble oligonucleotides, which are then degraded further into small acid-soluble oligonucleotides. The chain is Exodeoxyribonuclease 7 small subunit from Staphylococcus aureus (strain MRSA252).